A 201-amino-acid polypeptide reads, in one-letter code: Ribosome maturation factor RimP (201 aa).

The protein belongs to the RimP family.

It is found in the cytoplasm. Its function is as follows. Required for maturation of 30S ribosomal subunits. The sequence is that of Ribosome maturation factor RimP from Acidobacterium capsulatum (strain ATCC 51196 / DSM 11244 / BCRC 80197 / JCM 7670 / NBRC 15755 / NCIMB 13165 / 161).